The primary structure comprises 420 residues: Pyrophosphate--fructose 6-phosphate 1-phosphotransferase (420 aa).

Residue glycine 13 participates in diphosphate binding. Substrate-binding positions include 142–144, 190–192, glutamate 247, and 297–300; these read TVD, MGR, and YLQR. Aspartate 144 functions as the Proton acceptor in the catalytic mechanism.

This sequence belongs to the phosphofructokinase type A (PFKA) family. PPi-dependent PFK group II subfamily. Clade 'B2' sub-subfamily. Homodimer. Mg(2+) is required as a cofactor. It depends on Co(2+) as a cofactor. Requires Mn(2+) as cofactor.

It is found in the cytoplasm. The enzyme catalyses beta-D-fructose 6-phosphate + diphosphate = beta-D-fructose 1,6-bisphosphate + phosphate + H(+). It functions in the pathway carbohydrate degradation; glycolysis; D-glyceraldehyde 3-phosphate and glycerone phosphate from D-glucose: step 3/4. With respect to regulation, non-allosteric. In terms of biological role, catalyzes the phosphorylation of D-fructose 6-phosphate, the first committing step of glycolysis. Uses inorganic phosphate (PPi) as phosphoryl donor instead of ATP like common ATP-dependent phosphofructokinases (ATP-PFKs), which renders the reaction reversible, and can thus function both in glycolysis and gluconeogenesis. Consistently, PPi-PFK can replace the enzymes of both the forward (ATP-PFK) and reverse (fructose-bisphosphatase (FBPase)) reactions. The polypeptide is Pyrophosphate--fructose 6-phosphate 1-phosphotransferase (Methylococcus capsulatus (strain ATCC 33009 / NCIMB 11132 / Bath)).